A 78-amino-acid polypeptide reads, in one-letter code: MSRRCDLTGKKANNAFAVSHSHRRTKRLQQVNLQNKRVWWPSGNRWVKLKLSTKAIKTLEVKGLEAMAKEAGINLNHY.

It belongs to the bacterial ribosomal protein bL28 family.

In Nostoc sp. (strain PCC 7120 / SAG 25.82 / UTEX 2576), this protein is Large ribosomal subunit protein bL28.